A 152-amino-acid chain; its full sequence is Transcription elongation factor Spt5 (152 aa).

The 31-residue stretch at 94–124 folds into the KOW domain; that stretch reads PGDLVEVIAGPFKGQKAKVVKIDESKDEVVV.

It belongs to the archaeal Spt5 family. Heterodimer composed of Spt4 and Spt5. Interacts with RNA polymerase (RNAP) independently of nucleic acids. Forms a homodimer in solution.

Stimulates transcription elongation. In Pyrococcus furiosus (strain ATCC 43587 / DSM 3638 / JCM 8422 / Vc1), this protein is Transcription elongation factor Spt5.